Consider the following 215-residue polypeptide: 3-isopropylmalate dehydratase small subunit (215 aa).

This sequence belongs to the LeuD family. LeuD type 1 subfamily. Heterodimer of LeuC and LeuD.

The enzyme catalyses (2R,3S)-3-isopropylmalate = (2S)-2-isopropylmalate. It functions in the pathway amino-acid biosynthesis; L-leucine biosynthesis; L-leucine from 3-methyl-2-oxobutanoate: step 2/4. Functionally, catalyzes the isomerization between 2-isopropylmalate and 3-isopropylmalate, via the formation of 2-isopropylmaleate. This chain is 3-isopropylmalate dehydratase small subunit, found in Leptothrix cholodnii (strain ATCC 51168 / LMG 8142 / SP-6) (Leptothrix discophora (strain SP-6)).